The following is a 178-amino-acid chain: Ribosome maturation factor RimM (178 aa).

In terms of domain architecture, PRC barrel spans D101–F178.

It belongs to the RimM family. In terms of assembly, binds ribosomal protein uS19.

It is found in the cytoplasm. In terms of biological role, an accessory protein needed during the final step in the assembly of 30S ribosomal subunit, possibly for assembly of the head region. Essential for efficient processing of 16S rRNA. May be needed both before and after RbfA during the maturation of 16S rRNA. It has affinity for free ribosomal 30S subunits but not for 70S ribosomes. The chain is Ribosome maturation factor RimM from Stutzerimonas stutzeri (strain A1501) (Pseudomonas stutzeri).